A 256-amino-acid polypeptide reads, in one-letter code: Cysteine-rich repeat secretory protein 42 (256 aa).

A signal peptide spans 1-26; the sequence is MSSVFGSVHILAMIAIQLLLTHSVSS. 2 consecutive Gnk2-homologous domains span residues 33-136 and 142-253; these read YLHH…SVAS and YEND…LYPF.

It belongs to the cysteine-rich repeat secretory protein family.

The protein localises to the secreted. This chain is Cysteine-rich repeat secretory protein 42 (CRRSP42), found in Arabidopsis thaliana (Mouse-ear cress).